The chain runs to 201 residues: IMP cyclohydrolase (201 aa).

It belongs to the archaeal IMP cyclohydrolase family.

It carries out the reaction IMP + H2O = 5-formamido-1-(5-phospho-D-ribosyl)imidazole-4-carboxamide. Its pathway is purine metabolism; IMP biosynthesis via de novo pathway; IMP from 5-formamido-1-(5-phospho-D-ribosyl)imidazole-4-carboxamide: step 1/1. Functionally, catalyzes the cyclization of 5-formylamidoimidazole-4-carboxamide ribonucleotide to IMP. The protein is IMP cyclohydrolase of Methanococcus maripaludis (strain DSM 14266 / JCM 13030 / NBRC 101832 / S2 / LL).